A 485-amino-acid chain; its full sequence is Cytoplasmic tRNA 2-thiolation protein 2 (485 aa).

Belongs to the CTU2/NCS2 family.

The protein resides in the cytoplasm. It participates in tRNA modification; 5-methoxycarbonylmethyl-2-thiouridine-tRNA biosynthesis. In terms of biological role, plays a central role in 2-thiolation of mcm(5)S(2)U at tRNA wobble positions of tRNA(Lys), tRNA(Glu) and tRNA(Gln). May act by forming a heterodimer with NCS6 that ligates sulfur from thiocarboxylated URM1 onto the uridine of tRNAs at wobble position. Prior mcm(5) tRNA modification by the elongator complex is required for 2-thiolation. May also be involved in protein urmylation. This is Cytoplasmic tRNA 2-thiolation protein 2 from Vanderwaltozyma polyspora (strain ATCC 22028 / DSM 70294 / BCRC 21397 / CBS 2163 / NBRC 10782 / NRRL Y-8283 / UCD 57-17) (Kluyveromyces polysporus).